The primary structure comprises 170 residues: Ribosome maturation factor RimP (170 aa).

This sequence belongs to the RimP family.

It is found in the cytoplasm. In terms of biological role, required for maturation of 30S ribosomal subunits. The sequence is that of Ribosome maturation factor RimP from Chlorobaculum parvum (strain DSM 263 / NCIMB 8327) (Chlorobium vibrioforme subsp. thiosulfatophilum).